The following is a 411-amino-acid chain: Methylthioribose-1-phosphate isomerase (411 aa).

N-acetylserine is present on Ser-2. The Proton donor role is filled by Asp-280. Ser-351 is modified (phosphoserine).

It belongs to the eIF-2B alpha/beta/delta subunits family. MtnA subfamily. Homodimer.

It is found in the cytoplasm. The protein localises to the nucleus. It catalyses the reaction 5-(methylsulfanyl)-alpha-D-ribose 1-phosphate = 5-(methylsulfanyl)-D-ribulose 1-phosphate. Its pathway is amino-acid biosynthesis; L-methionine biosynthesis via salvage pathway; L-methionine from S-methyl-5-thio-alpha-D-ribose 1-phosphate: step 1/6. Its function is as follows. Catalyzes the interconversion of methylthioribose-1-phosphate (MTR-1-P) into methylthioribulose-1-phosphate (MTRu-1-P). This is Methylthioribose-1-phosphate isomerase from Saccharomyces cerevisiae (strain JAY291) (Baker's yeast).